The chain runs to 122 residues: Structural protein p14.5 (122 aa).

Disordered regions lie at residues 1 to 27 (MADF…LEYD) and 85 to 122 (TSLV…HKSK). Ala-2 carries the post-translational modification N-acetylalanine; by host. Residues 105–122 (KPKKKKHLFPKLSSHKSK) are compositionally biased toward basic residues.

This sequence belongs to the asfivirus structural protein p14.5 family. In terms of assembly, interacts with the major capsid protein. Interacts with host IRF3; this interaction interferes with the recruitment of IRF3 to TBK1. In terms of processing, acetylated.

The protein resides in the virion. Its function is as follows. Structural protein required for transport of intracellular particles from the assembly sites to the plasma membrane. Binds to both ssDNA and dsDNA. Suppressed the activation of the cGAS/STING pathway by interfering with the recruitment of IRF3 to TBK1, which in turn suppresses IRF3 phosphorylation, decreasing interferon production. The polypeptide is Structural protein p14.5 (African swine fever virus (isolate Tick/Malawi/Lil 20-1/1983) (ASFV)).